Reading from the N-terminus, the 397-residue chain is Polygalacturonase (397 aa).

Positions 1–22 (MGSYLGIYTILVLCLLGYSANA) are cleaved as a signal peptide. 4 PbH1 repeats span residues 169-195 (GKNM…HLGR), 196-217 (CEGV…SVGD), 219-239 (MKNL…SVGS), and 249-270 (VTDI…RIKT). Asn-171 is a glycosylation site (N-linked (GlcNAc...) asparagine). Residue Asp-210 is the Proton donor of the active site. A disulfide bond links Cys-212 and Cys-229. The active site involves His-233. The N-linked (GlcNAc...) asparagine glycan is linked to Asn-256. Disulfide bonds link Cys-341-Cys-347 and Cys-370-Cys-386.

This sequence belongs to the glycosyl hydrolase 28 family. As to expression, pollen.

The protein localises to the secreted. It localises to the cell wall. It catalyses the reaction (1,4-alpha-D-galacturonosyl)n+m + H2O = (1,4-alpha-D-galacturonosyl)n + (1,4-alpha-D-galacturonosyl)m.. Its function is as follows. May function in depolymerizing pectin during pollen development, germination, and tube growth. The polypeptide is Polygalacturonase (Brassica napus (Rape)).